The chain runs to 94 residues: Large ribosomal subunit protein bL27 (94 aa).

The propeptide occupies Met-1–Phe-9. A disordered region spans residues Lys-12–Ala-33.

It belongs to the bacterial ribosomal protein bL27 family. Post-translationally, the N-terminus is cleaved by ribosomal processing cysteine protease Prp.

The chain is Large ribosomal subunit protein bL27 from Lactococcus lactis subsp. cremoris (strain MG1363).